An 877-amino-acid polypeptide reads, in one-letter code: ABC transporter A family member 1 (877 aa).

7 helical membrane passes run 46-66 (YFST…LFLI), 268-288 (VWGG…LLYK), 324-344 (ILIS…FFLG), 347-367 (FFVL…VAFF), 379-399 (IGIG…FSGM), 420-440 (IILF…IGNV), and 479-499 (LLAL…IIPG). The region spanning 552 to 788 (LIICGLSKSY…YGEGYSVNIV (237 aa)) is the ABC transporter domain. 591 to 598 (GSNGCGKS) serves as a coordination point for ATP.

The protein belongs to the ABC transporter superfamily. ABCA family.

Its subcellular location is the membrane. This Dictyostelium discoideum (Social amoeba) protein is ABC transporter A family member 1 (abcA1).